The following is a 1076-amino-acid chain: Regulator of G-protein signaling protein-like (1076 aa).

Residues 645–764 enclose the RGS domain; it reads NLTEVLLNTQ…LFPPHHQEVE (120 aa). The segment covering 834–852 has biased composition (polar residues); it reads TTAHNTSGRSAPPSTNVRS. The tract at residues 834–854 is disordered; the sequence is TTAHNTSGRSAPPSTNVRSAD. Residues 960–982 traverse the membrane as a helical segment; sequence VFHGAIMSVFPVVMYFWKRFCFW.

Its subcellular location is the membrane. The chain is Regulator of G-protein signaling protein-like (RGSL1) from Homo sapiens (Human).